The sequence spans 1773 residues: Mucin-22 (1773 aa).

The signal sequence occupies residues 1–26; sequence MRRGNISPAFWFLWLLLFGLLGPSSE. At 27–1660 the chain is on the extracellular side; that stretch reads NTTAFTKGSD…VIKPSGYLQP (1634 aa). Disordered regions lie at residues 61-102, 176-357, 372-405, 434-572, 590-674, 754-1026, 1064-1485, and 1603-1639; these read TGSK…TDSG, TMAS…SETT, MGSE…VGSE, SETI…STAS, TVGS…EGSE, DTTT…ETTM, TTIA…GSET, and MGAS…SMGT. The segment at 153-1514 is 124 X 10 AA approximate repeats; sequence MASSTTSTAG…PTATSLTGSE (1362 aa). Positions 178–243 are enriched in low complexity; sequence ASTTGSETAT…GSEATTTSTA (66 aa). The span at 248–258 shows a compositional bias: polar residues; the sequence is ITASSMSSETT. Over residues 262-357 the composition is skewed to low complexity; sequence AAGSNTTTAS…TVSTAGSETT (96 aa). Low complexity-rich tracts occupy residues 440 to 481 and 490 to 546; these read STAG…AAST and STAG…SEPT. Over residues 547–572 the composition is skewed to polar residues; the sequence is MASTMGSETTMASTIGPETTKVSTAS. Composition is skewed to low complexity over residues 755-1025 and 1064-1465; these read TTTA…SETT and TTIA…GSET. Composition is skewed to polar residues over residues 1466 to 1485 and 1615 to 1639; these read NTAC…GSET and RTTT…SMGT. A helical membrane pass occupies residues 1661-1681; that stretch reads WAIILISLAAVVAAVGLSVGL. The Cytoplasmic portion of the chain corresponds to 1682-1773; the sequence is SFCLRNLFFP…GGHYGHGGGH (92 aa).

As to expression, expressed in lung by serous cells of the submucosal gland (at protein level). Detected in the placenta, lung and testis.

The protein resides in the membrane. This is Mucin-22 (MUC22) from Homo sapiens (Human).